We begin with the raw amino-acid sequence, 262 residues long: Chondroitin proteoglycan 3 (262 aa).

The first 17 residues, 1-17 (MRSSFIFALLLIGAALA), serve as a signal peptide directing secretion. The tract at residues 37 to 68 (FSGEASGEASGEASGEFSGEGSGEGSGELSPE) is disordered. The span at 39-53 (GEASGEASGEASGEF) shows a compositional bias: low complexity. 3 N-linked (GlcNAc...) asparagine glycosylation sites follow: asparagine 140, asparagine 148, and asparagine 224.

The chain is Chondroitin proteoglycan 3 (cpg-3) from Caenorhabditis briggsae.